The following is a 160-amino-acid chain: Phosphopantetheine adenylyltransferase (160 aa).

Ser-9 is a substrate binding site. ATP is bound by residues 9 to 10 (SL) and His-17. Substrate-binding residues include Lys-41, Leu-74, and Lys-88. ATP is bound by residues 89–91 (GIR), Glu-99, and 123–129 (YLHLSST).

Belongs to the bacterial CoaD family. In terms of assembly, homohexamer. The cofactor is Mg(2+).

The protein localises to the cytoplasm. It carries out the reaction (R)-4'-phosphopantetheine + ATP + H(+) = 3'-dephospho-CoA + diphosphate. It functions in the pathway cofactor biosynthesis; coenzyme A biosynthesis; CoA from (R)-pantothenate: step 4/5. Reversibly transfers an adenylyl group from ATP to 4'-phosphopantetheine, yielding dephospho-CoA (dPCoA) and pyrophosphate. The polypeptide is Phosphopantetheine adenylyltransferase (Renibacterium salmoninarum (strain ATCC 33209 / DSM 20767 / JCM 11484 / NBRC 15589 / NCIMB 2235)).